The chain runs to 454 residues: Glutamine synthetase (454 aa).

In terms of domain architecture, GS beta-grasp spans 19 to 111 (NNVKFIRFQF…VICDVYKDEK (93 aa)). Residues 118-454 (PRSRLKAILE…DWETGKYLIY (337 aa)) enclose the GS catalytic domain. Residues Glu-142 and Glu-144 each contribute to the Mg(2+) site. Glu-194 contributes to the ATP binding site. Glu-199 and Glu-206 together coordinate Mg(2+). L-glutamate-binding positions include 250 to 251 (NG) and Gly-251. His-255 is a binding site for Mg(2+). ATP is bound by residues 257 to 259 (HQS) and Ser-259. 3 residues coordinate L-glutamate: Arg-309, Glu-315, and Arg-327. ATP contacts are provided by Arg-327, Arg-332, and Lys-339. Glu-344 is a Mg(2+) binding site. Position 346 (Arg-346) interacts with L-glutamate.

It belongs to the glutamine synthetase family. In terms of assembly, oligomer of 12 subunits arranged in the form of two hexagons. It depends on Mg(2+) as a cofactor.

It is found in the cytoplasm. The catalysed reaction is L-glutamate + NH4(+) + ATP = L-glutamine + ADP + phosphate + H(+). Feedback inhibited by glycine and alanine, and inhibited by low concentrations of methionine sulfoximine. In terms of biological role, probably involved in nitrogen metabolism via ammonium assimilation. Catalyzes the ATP-dependent biosynthesis of glutamine from glutamate and ammonia. Beta-glutamate is a much poorer substrate than alpha-glutamate. This chain is Glutamine synthetase, found in Methanocaldococcus jannaschii (strain ATCC 43067 / DSM 2661 / JAL-1 / JCM 10045 / NBRC 100440) (Methanococcus jannaschii).